The sequence spans 351 residues: RCC1 repeat-containing protein C10F6.04 (351 aa).

RCC1 repeat units follow at residues 1-48, 50-106, 108-162, and 163-212; these read MLLS…LLDE, SQLW…IVHA, RRRV…CVTN, and EGNL…VLQE.

The protein localises to the cytoplasm. Its subcellular location is the nucleus. In Schizosaccharomyces pombe (strain 972 / ATCC 24843) (Fission yeast), this protein is RCC1 repeat-containing protein C10F6.04.